Reading from the N-terminus, the 121-residue chain is Basic phospholipase A2 caudoxin (121 aa).

Intrachain disulfides connect C25–C114, C27–C43, C42–C94, C48–C121, C49–C87, C56–C80, and C74–C85. Residues Y26, G28, and G30 each coordinate Ca(2+). H46 is an active-site residue. D47 is a binding site for Ca(2+). D88 is an active-site residue.

This sequence belongs to the phospholipase A2 family. Group II subfamily. D49 sub-subfamily. As to quaternary structure, monomer. Requires Ca(2+) as cofactor. In terms of tissue distribution, expressed by the venom gland.

It is found in the secreted. It carries out the reaction a 1,2-diacyl-sn-glycero-3-phosphocholine + H2O = a 1-acyl-sn-glycero-3-phosphocholine + a fatty acid + H(+). Functionally, snake venom phospholipase A2 (PLA2) that shows anticoagulant activity and presynaptic neurotoxicity. Acts as an anticoagulant toxin by inhibiting prothrombinase complex formation. Shows about 50% of the prothrombinase complex inhibition compared to CM-IV of N.nigricollis venom. Acts as a neurotoxin by inhibiting neuromuscular transmission by blocking acetylcholine release from the nerve termini. PLA2 catalyzes the calcium-dependent hydrolysis of the 2-acyl groups in 3-sn-phosphoglycerides. This Bitis caudalis (Horned adder) protein is Basic phospholipase A2 caudoxin.